The following is a 365-amino-acid chain: Serine/threonine-protein phosphatase 2A activator 1 (365 aa).

The tract at residues Tyr-321–Thr-349 is disordered. A compositionally biased stretch (low complexity) spans Pro-331–Thr-342.

It belongs to the PTPA-type PPIase family.

It is found in the cytoplasm. Its subcellular location is the nucleus. The enzyme catalyses [protein]-peptidylproline (omega=180) = [protein]-peptidylproline (omega=0). Its function is as follows. PPIases accelerate the folding of proteins. It catalyzes the cis-trans isomerization of proline imidic peptide bonds in oligopeptides. Acts as a regulatory subunit for PP2A-like phosphatases modulating their activity or substrate specificity, probably by inducing a conformational change in the catalytic subunit, a direct target of the PPIase. Can reactivate inactive phosphatase PP2A-phosphatase methylesterase complexes (PP2Ai) in presence of ATP and Mg(2+) by dissociating the inactive form from the complex. The polypeptide is Serine/threonine-protein phosphatase 2A activator 1 (RRD1) (Eremothecium gossypii (strain ATCC 10895 / CBS 109.51 / FGSC 9923 / NRRL Y-1056) (Yeast)).